The following is a 519-amino-acid chain: UvrABC system protein C (519 aa).

The GIY-YIG domain maps to 9 to 87; it reads HLPGCYLFKN…IKKHWPRYNI (79 aa). Residues 191–226 enclose the UVR domain; it reads RELIESMEKDMRELASRQQFEQAMALRDEIAALEYL.

It belongs to the UvrC family. As to quaternary structure, interacts with UvrB in an incision complex.

The protein resides in the cytoplasm. The UvrABC repair system catalyzes the recognition and processing of DNA lesions. UvrC both incises the 5' and 3' sides of the lesion. The N-terminal half is responsible for the 3' incision and the C-terminal half is responsible for the 5' incision. The polypeptide is UvrABC system protein C (Methanosarcina barkeri (strain Fusaro / DSM 804)).